The chain runs to 745 residues: Heterogeneous nuclear ribonucleoprotein U-like protein 2 (745 aa).

In terms of domain architecture, SAP spans 3 to 37 (VKRLKVTELRSELQRRGLDSRGLKMDLAQRLQEAL). 2 disordered regions span residues 44 to 239 (DEAG…DEEE) and 625 to 664 (EEARKLLPPSEKRTNRRNNRNKRNRQNRSRGQGYVGGQRR). The segment covering 73 to 97 (GDEEEEDDDEEEDEEALLEDEDEEP) has biased composition (acidic residues). A compositionally biased stretch (basic and acidic residues) spans 142–161 (GEEHDNGKGEEDGPEERSGD). Residue S159 is modified to Phosphoserine. Residue T163 is modified to Phosphothreonine. Phosphoserine occurs at positions 166, 183, 186, 224, and 226. Residues 183-221 (SEKSKPAGSDGERRGVKRQRDEKDEHGRAYYEFREEAYH) are compositionally biased toward basic and acidic residues. The B30.2/SPRY domain occupies 224–417 (SKSPPPPEEE…VELNFGQKEE (194 aa)). The segment covering 230-239 (PEEEAKDEEE) has biased composition (acidic residues). Basic and acidic residues predominate over residues 625–637 (EEARKLLPPSEKR). Residues 638-652 (TNRRNNRNKRNRQNR) are compositionally biased toward basic residues. Omega-N-methylarginine occurs at positions 654, 682, 736, and 745.

Binds to MLF1 and retains it in the nucleus.

It is found in the nucleus. The sequence is that of Heterogeneous nuclear ribonucleoprotein U-like protein 2 (Hnrnpul2) from Mus musculus (Mouse).